Reading from the N-terminus, the 632-residue chain is Phosphatidylinositol-3,5-bisphosphate 3-phosphatase MTMR8 (632 aa).

A Myotubularin phosphatase domain is found at 126 to 500 (GWELISVVND…LHFKFWCGMY (375 aa)). A 1,2-diacyl-sn-glycero-3-phospho-(1D-myo-inositol-3,5-bisphosphate) contacts are provided by N250, N275, and I276. Residues N250, N275, and I276 each coordinate a 1,2-diacyl-sn-glycero-3-phospho-(1D-myo-inositol-3-phosphate). Catalysis depends on C338, which acts as the Phosphocysteine intermediate. A 1,2-diacyl-sn-glycero-3-phospho-(1D-myo-inositol-3,5-bisphosphate) contacts are provided by S339, D340, G341, W342, D343, R344, K380, and R384. A 1,2-diacyl-sn-glycero-3-phospho-(1D-myo-inositol-3-phosphate) is bound by residues S339, D340, G341, W342, D343, and R344. The phosphate site is built by S339 and D340. Phosphate contacts are provided by W342, D343, and R344. R384 is an a 1,2-diacyl-sn-glycero-3-phospho-(1D-myo-inositol-3-phosphate) binding site. The interval 545–632 (LPDPAGPINT…HSKEEVQESS (88 aa)) is disordered. Residues 602-632 (EPAANEHDLSSKDKPVFVETEHSKEEVQESS) show a composition bias toward basic and acidic residues.

The protein belongs to the protein-tyrosine phosphatase family. Non-receptor class myotubularin subfamily. In terms of assembly, homodimer.

The protein localises to the nucleus envelope. The enzyme catalyses a 1,2-diacyl-sn-glycero-3-phospho-(1D-myo-inositol-3,5-bisphosphate) + H2O = a 1,2-diacyl-sn-glycero-3-phospho-(1D-myo-inositol-5-phosphate) + phosphate. It catalyses the reaction a 1,2-diacyl-sn-glycero-3-phospho-(1D-myo-inositol-3-phosphate) + H2O = a 1,2-diacyl-sn-glycero-3-phospho-(1D-myo-inositol) + phosphate. The catalysed reaction is 1,2-dioctanoyl-sn-glycero-3-phospho-(1D-myo-inositol-3,5-bisphosphate) + H2O = 1,2-dioctanoyl-sn-glycero-3-phospho-(1D-myo-inositol-5-phosphate) + phosphate. In terms of biological role, lipid phosphatase that specifically dephosphorylates the D-3 position of phosphatidylinositol 3-phosphate and phosphatidylinositol 3,5-bisphosphate, generating phosphatidylinositol and phosphatidylinositol 5-phosphate. The protein is Phosphatidylinositol-3,5-bisphosphate 3-phosphatase MTMR8 (mtmr8) of Danio rerio (Zebrafish).